A 340-amino-acid chain; its full sequence is MIQDEIPIPVQTLQWKCIESKKEGKRLHYGRFAVSPFRKGQASTVGVAMRRALLGEVEGTSITYAKFKNVVHEYSTLVGIKESIHDILINLKEIVLQSDSYETQKASISILGPRDVTAGDILLPTSVKIIDASQHIATITTAIPLDVELRIERDCGYRTLNLKESQSGEFFIDALFTPIRNANYSIHSFESNNKVREILFLEVWTNGSLTPGAALSEASRDLIDLFIIFLNMEKEESIKEIENNELNIKNFPSTSISVDIDRMAKEVAFKQIFIDQLELPARAYNCLKKMQVHTVSDLLKYTQYDLKKVKNFGNKSVEQVVEALQERFAIQLPKDQFNIS.

Residues 1 to 233 form an alpha N-terminal domain (alpha-NTD) region; that stretch reads MIQDEIPIPV…DLFIIFLNME (233 aa). Residues 264 to 340 are alpha C-terminal domain (alpha-CTD); it reads AKEVAFKQIF…QLPKDQFNIS (77 aa).

Belongs to the RNA polymerase alpha chain family. In plastids the minimal PEP RNA polymerase catalytic core is composed of four subunits: alpha, beta, beta', and beta''. When a (nuclear-encoded) sigma factor is associated with the core the holoenzyme is formed, which can initiate transcription.

The protein localises to the plastid. Its subcellular location is the chloroplast. It carries out the reaction RNA(n) + a ribonucleoside 5'-triphosphate = RNA(n+1) + diphosphate. In terms of biological role, DNA-dependent RNA polymerase catalyzes the transcription of DNA into RNA using the four ribonucleoside triphosphates as substrates. The chain is DNA-directed RNA polymerase subunit alpha from Psilotum nudum (Whisk fern).